Reading from the N-terminus, the 642-residue chain is Chaperone protein DnaK (642 aa).

Threonine 198 is modified (phosphothreonine; by autocatalysis). Residues 602-642 (AYAKMTEKQQSDDGAGTQNADHKEDDVVDADFEEVKSDKKD) are disordered.

This sequence belongs to the heat shock protein 70 family.

Its function is as follows. Acts as a chaperone. The chain is Chaperone protein DnaK from Dichelobacter nodosus (strain VCS1703A).